We begin with the raw amino-acid sequence, 223 residues long: AN1-type zinc finger protein 6 (223 aa).

The segment at 8-42 adopts an A20-type zinc-finger fold; the sequence is SQAPMLCSTGCGFYGNPRTNGMCSVCYKEHLQRQN. Zn(2+) is bound by residues Cys-14, Cys-18, Cys-30, and Cys-33. Residues 41–155 form a disordered region; that stretch reads QNSSNGRISP…PSEEQSKSLE (115 aa). The residue at position 49 (Ser-49) is a Phosphoserine. Polar residues-rich tracts occupy residues 77–110 and 137–148; these read ALDS…STSV and SSVSDTTQQPSE. The segment at 158–204 adopts an AN1-type zinc-finger fold; sequence KQKKNRCFMCRKKVGLTGFECRCGNVYCGVHRYSDVHNCSYNYKADA. Zn(2+)-binding residues include Cys-164, Cys-167, Cys-178, Cys-180, Cys-185, His-188, His-194, and Cys-196. Lys-219 bears the N6-acetyllysine mark.

Interacts with PKN1. Interacts with TRAF2. Interacts with mono- and polyubiquitin. Interacts with PEX6. Interacts with PEX5 (Cys-linked ubiquitinated).

It is found in the cytoplasm. Functionally, involved in regulation of TNF-alpha induced NF-kappa-B activation and apoptosis. Involved in modulation of 'Lys-48'-linked polyubiquitination status of TRAF2 and decreases association of TRAF2 with RIPK1. Required for PTS1 target sequence-dependent protein import into peroxisomes and PEX5 stability; may cooperate with PEX6. In vitro involved in PEX5 export from the cytosol to peroxisomes. In Mus musculus (Mouse), this protein is AN1-type zinc finger protein 6 (Zfand6).